The chain runs to 173 residues: Zinc finger matrin-type protein 5 (173 aa).

The C3H1-type zinc-finger motif lies at 51–79 (ERSKEVCRKFVQTGQCVFGTSCRFSHMSE). The disordered stretch occupies residues 83–111 (KMLEQKIDDEKRQKEDPDQDGSSERSVDE).

As to quaternary structure, component of the U11/U12 snRNPs that are part of the U12-type spliceosome.

It localises to the nucleus. In Danio rerio (Zebrafish), this protein is Zinc finger matrin-type protein 5 (zmat5).